The sequence spans 197 residues: Small ribosomal subunit protein eS1 (197 aa).

Belongs to the eukaryotic ribosomal protein eS1 family.

In Sulfolobus acidocaldarius (strain ATCC 33909 / DSM 639 / JCM 8929 / NBRC 15157 / NCIMB 11770), this protein is Small ribosomal subunit protein eS1.